We begin with the raw amino-acid sequence, 213 residues long: MDQEPVGGVERGEAVAASGAAAAAAFGESAGQMSNERGFENVELGVIGKKKKVPRRVIHFVSGETMEEYSTDEDEVDGLEKKDVLPTVDPTKLTWGPYLWFYMLRAATSTLSVCDFLGEKIASVLGISTPKYQYAIDEYYRMKKEEEEEEEENRMSEEAEKQYQQNKLQTDSIVQTDQPETVISSSFVNVNFEMEGDSEVIMESKQNPVSVPP.

Methionine 1 is subject to N-acetylmethionine. The residue at position 70 (serine 70) is a Phosphoserine. Threonine 71 is subject to Phosphothreonine. The stretch at 136–173 forms a coiled coil; the sequence is IDEYYRMKKEEEEEEEENRMSEEAEKQYQQNKLQTDSI. The disordered stretch occupies residues 147–175; that stretch reads EEEEEENRMSEEAEKQYQQNKLQTDSIVQ. Residues 162–175 are compositionally biased toward polar residues; it reads QYQQNKLQTDSIVQ.

Belongs to the FAM177 family.

This chain is Protein FAM177A1 (FAM177A1), found in Homo sapiens (Human).